Consider the following 1144-residue polypeptide: Probable translation initiation factor IF-2 (1144 aa).

The DOD-type homing endonuclease domain maps to 232–362 (FAGVMFGDGS…LSLLLLRFGI (131 aa)). Positions 551–768 (TTETHNFVAN…LIAGLSQKYL (218 aa)) constitute a tr-type G domain. GTP-binding positions include 624-628 (DTPGH) and 678-681 (NKID).

It belongs to the TRAFAC class translation factor GTPase superfamily. Classic translation factor GTPase family. IF-2 subfamily. Post-translationally, this protein undergoes a protein self splicing that involves a post-translational excision of the intervening region (intein) followed by peptide ligation.

Functionally, function in general translation initiation by promoting the binding of the formylmethionine-tRNA to ribosomes. Seems to function along with eIF-2. This is Probable translation initiation factor IF-2 (infB) from Thermococcus kodakarensis (strain ATCC BAA-918 / JCM 12380 / KOD1) (Pyrococcus kodakaraensis (strain KOD1)).